Here is a 236-residue protein sequence, read N- to C-terminus: Ion-translocating oxidoreductase complex subunit E (236 aa).

Helical transmembrane passes span 18–38, 39–59, 69–89, 92–112, 128–148, and 182–202; these read ALVQLLGLCPLLAVSSTATNA, LGLGLATTLVLVLTNSAVSAL, IPIYVMIIASVVSAVQMLINA, FGLYQSLGIFIPLIVTNCIVI, ALDGLATGLGATAALFVLGAL, and PFLLAILPPGAFLGLGFMLAF. A disordered region spans residues 217–236; sequence RSAVGQALRGAAPTDNHEQA.

The protein belongs to the NqrDE/RnfAE family. The complex is composed of six subunits: RnfA, RnfB, RnfC, RnfD, RnfE and RnfG.

It localises to the cell inner membrane. Part of a membrane-bound complex that couples electron transfer with translocation of ions across the membrane. The protein is Ion-translocating oxidoreductase complex subunit E of Edwardsiella ictaluri (strain 93-146).